A 269-amino-acid polypeptide reads, in one-letter code: UPF0739 protein C1orf74 (269 aa).

Belongs to the UPF0739 family.

The sequence is that of UPF0739 protein C1orf74 (C1orf74) from Homo sapiens (Human).